The chain runs to 1098 residues: Protein translocase subunit SecA (1098 aa).

Residues Gln176, 194 to 198 (GEGKT), and Asp696 each bind ATP. Residues 1024-1098 (EPEQVREAAP…KYKNCHGQNA (75 aa)) are disordered. 2 stretches are compositionally biased toward basic and acidic residues: residues 1041–1051 (QYREEKQDLSD) and 1058–1077 (AEHDTREVKREPVRAEKTVG). Cys1082, Cys1084, Cys1093, and His1094 together coordinate Zn(2+).

It belongs to the SecA family. As to quaternary structure, monomer and homodimer. Part of the essential Sec protein translocation apparatus which comprises SecA, SecYEG and auxiliary proteins SecDF. Other proteins may also be involved. Zn(2+) is required as a cofactor.

Its subcellular location is the cell inner membrane. It is found in the cytoplasm. The catalysed reaction is ATP + H2O + cellular proteinSide 1 = ADP + phosphate + cellular proteinSide 2.. Functionally, part of the Sec protein translocase complex. Interacts with the SecYEG preprotein conducting channel. Has a central role in coupling the hydrolysis of ATP to the transfer of proteins into and across the cell membrane, serving as an ATP-driven molecular motor driving the stepwise translocation of polypeptide chains across the membrane. The chain is Protein translocase subunit SecA from Phocaeicola vulgatus (strain ATCC 8482 / DSM 1447 / JCM 5826 / CCUG 4940 / NBRC 14291 / NCTC 11154) (Bacteroides vulgatus).